The following is a 147-amino-acid chain: Prefoldin subunit alpha (147 aa).

The protein belongs to the prefoldin alpha subunit family. As to quaternary structure, heterohexamer of two alpha and four beta subunits.

Its subcellular location is the cytoplasm. In terms of biological role, molecular chaperone capable of stabilizing a range of proteins. Seems to fulfill an ATP-independent, HSP70-like function in archaeal de novo protein folding. This chain is Prefoldin subunit alpha, found in Thermococcus onnurineus (strain NA1).